A 213-amino-acid polypeptide reads, in one-letter code: Probable GTP-binding protein EngB (213 aa).

The 175-residue stretch at 30 to 204 (EGFEVAFAGR…YTVLAGWMEL (175 aa)) folds into the EngB-type G domain. Residues 38–45 (GRSNAGKS), 64–68 (GRTQL), 82–85 (DLPG), 149–152 (TKAD), and 182–185 (LFSA) contribute to the GTP site. Residues S45 and T66 each coordinate Mg(2+).

This sequence belongs to the TRAFAC class TrmE-Era-EngA-EngB-Septin-like GTPase superfamily. EngB GTPase family. The cofactor is Mg(2+).

Functionally, necessary for normal cell division and for the maintenance of normal septation. In Pseudomonas fluorescens (strain ATCC BAA-477 / NRRL B-23932 / Pf-5), this protein is Probable GTP-binding protein EngB.